The following is a 340-amino-acid chain: Probable complex I intermediate-associated protein 30, mitochondrial (340 aa).

Belongs to the CIA30 family.

It is found in the mitochondrion. Functionally, chaperone protein involved in the assembly of the mitochondrial NADH:ubiquinone oxidoreductase complex (complex I). Required for normal growth and reproduction. The sequence is that of Probable complex I intermediate-associated protein 30, mitochondrial (nuaf-1) from Caenorhabditis elegans.